Consider the following 344-residue polypeptide: GTPase Obg (344 aa).

An Obg domain is found at 1-159; the sequence is MKFLDLAKVY…RTIWLRLKLI (159 aa). Positions 160-327 constitute an OBG-type G domain; sequence ADVGLLGLPN…VLRALRARID (168 aa). Residues 166–173, 191–195, 212–215, 279–282, and 308–310 contribute to the GTP site; these read GLPNAGKS, FTTLH, DIPG, NKID, and SGA. Mg(2+)-binding residues include Ser-173 and Thr-193.

Belongs to the TRAFAC class OBG-HflX-like GTPase superfamily. OBG GTPase family. As to quaternary structure, monomer. The cofactor is Mg(2+).

It localises to the cytoplasm. In terms of biological role, an essential GTPase which binds GTP, GDP and possibly (p)ppGpp with moderate affinity, with high nucleotide exchange rates and a fairly low GTP hydrolysis rate. Plays a role in control of the cell cycle, stress response, ribosome biogenesis and in those bacteria that undergo differentiation, in morphogenesis control. In Ruegeria pomeroyi (strain ATCC 700808 / DSM 15171 / DSS-3) (Silicibacter pomeroyi), this protein is GTPase Obg.